The sequence spans 156 residues: Transcription elongation factor GreA (156 aa).

Residues 1–84 (MAKYTISKHR…IEDVLRSTDE (84 aa)) adopt a coiled-coil conformation.

This sequence belongs to the GreA/GreB family.

Its function is as follows. Necessary for efficient RNA polymerase transcription elongation past template-encoded arresting sites. The arresting sites in DNA have the property of trapping a certain fraction of elongating RNA polymerases that pass through, resulting in locked ternary complexes. Cleavage of the nascent transcript by cleavage factors such as GreA or GreB allows the resumption of elongation from the new 3'terminus. GreA releases sequences of 2 to 3 nucleotides. This chain is Transcription elongation factor GreA, found in Ureaplasma parvum serovar 3 (strain ATCC 27815 / 27 / NCTC 11736).